Here is a 37-residue protein sequence, read N- to C-terminus: M-oxotoxin-Ot2a (37 aa).

As to expression, expressed by the venom gland.

The protein localises to the secreted. In terms of biological role, disrupts biological membranes, particularly those rich in phosphocholine. Has antimicrobial activity against Gram-negative bacterium E.coli, Gram-positive bacteria B.subtilis and S.aureus, and hemolytic activity against sheep, pig and guinea pig red blood cells. Has insecticidal activity against S.frugiperda ovarian cells by opening non-selective ion channels. Enhances the insecticidal activity of spider venom neurotoxic peptides. The polypeptide is M-oxotoxin-Ot2a (Oxyopes takobius (Lynx spider)).